A 61-amino-acid chain; its full sequence is Small ribosomal subunit protein uS14 (61 aa).

Zn(2+)-binding residues include C24, C27, C40, and C43.

The protein belongs to the universal ribosomal protein uS14 family. Zinc-binding uS14 subfamily. In terms of assembly, part of the 30S ribosomal subunit. Contacts proteins S3 and S10. The cofactor is Zn(2+).

Binds 16S rRNA, required for the assembly of 30S particles and may also be responsible for determining the conformation of the 16S rRNA at the A site. The polypeptide is Small ribosomal subunit protein uS14 (Treponema denticola (strain ATCC 35405 / DSM 14222 / CIP 103919 / JCM 8153 / KCTC 15104)).